We begin with the raw amino-acid sequence, 350 residues long: Olfactory receptor 52I2 (350 aa).

Topologically, residues 1–55 (MCQQILRDCILLIHHLCINRKKVSLVMLGPAYNHTMETPASFLLVGIPGLQSSHL) are extracellular. Asn33 carries an N-linked (GlcNAc...) asparagine glycan. The helical transmembrane segment at 56–76 (WLAISLSAMYIIALLGNTIIV) threads the bilayer. Topologically, residues 77–84 (TAIWMDST) are cytoplasmic. The chain crosses the membrane as a helical span at residues 85–105 (RHEPMYCFLCVLAAVDIVMAS). Topologically, residues 106-129 (SVVPKMVSIFCSGDSSISFSACFT) are extracellular. The cysteines at positions 127 and 219 are disulfide-linked. Residues 130–150 (QMFFVHLATAVETGLLLTMAF) form a helical membrane-spanning segment. Over 151–169 (DRYVAICKPLHYKRILTPQ) the chain is Cytoplasmic. The helical transmembrane segment at 170–190 (VMLGMSMAITIRAIIAITPLS) threads the bilayer. Residues 191 to 226 (WMVSHLPFCGSNVVVHSYCEHIALARLACADPVPSS) lie on the Extracellular side of the membrane. Residues 227 to 247 (LYSLIGSSLMVGSDVAFIAAS) traverse the membrane as a helical segment. The Cytoplasmic segment spans residues 248–267 (YILILKAVFGLSSKTAQLKA). A helical transmembrane segment spans residues 268–288 (LSTCGSHVGVMALYYLPGMAS). Over 289 to 304 (IYAAWLGQDVVPLHTQ) the chain is Extracellular. Residues 305–325 (VLLADLYVIIPATLNPIIYGM) form a helical membrane-spanning segment. The Cytoplasmic segment spans residues 326-350 (RTKQLRERIWSYLMHVLFDHSNLGS).

The protein belongs to the G-protein coupled receptor 1 family.

The protein resides in the cell membrane. In terms of biological role, odorant receptor. This chain is Olfactory receptor 52I2 (OR52I2), found in Homo sapiens (Human).